The primary structure comprises 696 residues: Polyribonucleotide nucleotidyltransferase (696 aa).

Aspartate 486 and aspartate 492 together coordinate Mg(2+). The region spanning 553-612 (PRIIVRNIPKDRIGELIGPGGKNVRGISELTGAELYIEDDGRVTISGSNQESAEKAAKMV) is the KH domain. The 69-residue stretch at 622 to 690 (GKIYEGKVKR…KTGKIDLSRK (69 aa)) folds into the S1 motif domain.

The protein belongs to the polyribonucleotide nucleotidyltransferase family. The cofactor is Mg(2+).

Its subcellular location is the cytoplasm. The enzyme catalyses RNA(n+1) + phosphate = RNA(n) + a ribonucleoside 5'-diphosphate. Functionally, involved in mRNA degradation. Catalyzes the phosphorolysis of single-stranded polyribonucleotides processively in the 3'- to 5'-direction. This chain is Polyribonucleotide nucleotidyltransferase, found in Leptospira borgpetersenii serovar Hardjo-bovis (strain JB197).